Consider the following 534-residue polypeptide: Cytochrome P450 monooxygenase CYP4 (534 aa).

A helical transmembrane segment spans residues 46 to 66 (TIIFCVLMSLVGYIVSRIIWG). The N-linked (GlcNAc...) asparagine glycan is linked to Asn-220. Cys-477 provides a ligand contact to heme. Residue Asn-515 is glycosylated (N-linked (GlcNAc...) asparagine).

Belongs to the cytochrome P450 family. Heme is required as a cofactor.

Its subcellular location is the membrane. Its pathway is secondary metabolite biosynthesis. In terms of biological role, cytochrome P450 monooxygenase; part of the gene cluster that mediates the biosynthesis of a tyrosine-derived cytochalasan acting as a fungal signal recognized by resistant rice plants and leads to avirulence in Pi33 resistant rice cultivars. The first step in the pathway is catalyzed by the hybrid PKS-NRPS ACE1, assisted by the enoyl reductase RAP1, that are responsible for fusion of the tyrosine precursor and the polyketide backbone. The polyketide synthase module (PKS) of ACE1 is responsible for the synthesis of the polyketide backbone and the downstream nonribosomal peptide synthetase (NRPS) amidates the carboxyl end of the polyketide with the tyrosine precursor. Because ACE1 lacks a designated enoylreductase (ER) domain, the required activity is provided the enoyl reductase RAP1. Reduction by the hydrolyase ORFZ, followed by dehydration and intra-molecular Diels-Alder cyclization by the Diels-Alderase ORF3 then yield the required isoindolone-fused macrocycle. A number of oxidative steps catalyzed by the tailoring enzymes identified within the cluster, including cytochrome P450 monooxygenases CYP1 to CYP4, the FAD-linked oxidoreductase OXR2 and the short-chain dehydrogenase/reductase OXR1, are further required to afford the final cytochalasans that confer avirulence and which have still to be identified. The monooxygenase CYP1 has been shown to be a site-selective C-18 hydroxylase whereas the function of CYP3 is the site-selective epoxidation of the C-6/C-7 olefin that is present in some intermediate compounds. Finally, SYN2 and RAP2 are not required for avirulence in Pi33 resistant rice cultivars. The sequence is that of Cytochrome P450 monooxygenase CYP4 from Pyricularia oryzae (strain 70-15 / ATCC MYA-4617 / FGSC 8958) (Rice blast fungus).